The sequence spans 359 residues: Apelin receptor B (359 aa).

The Extracellular segment spans residues 1 to 36; the sequence is MNAMDNMTADYSPDYFDDAVNSSMCEYDEWEPSYSL. N-linked (GlcNAc...) asparagine glycosylation is found at Asn6 and Asn21. Disulfide bonds link Cys25/Cys288 and Cys107/Cys186. Residues 37 to 57 traverse the membrane as a helical segment; that stretch reads IPVLYMLIFILGLTGNGVVIF. The Cytoplasmic segment spans residues 58–75; the sequence is TVWRAQSKRRAADVYIGN. The helical transmembrane segment at 76 to 96 threads the bilayer; it reads LALADLTFVVTLPLWAVYTAL. At 97–108 the chain is on the extracellular side; sequence GYHWPFGVALCK. A helical transmembrane segment spans residues 109-129; the sequence is ISSYVVLLNMYASVFCLTCLS. The Cytoplasmic segment spans residues 130–151; it reads LDRYMAIVHSLTSTQLRTRGHM. Residues 152–172 form a helical membrane-spanning segment; that stretch reads RASLTAIWLLSGVLAAPTLLF. Residues 173–213 lie on the Extracellular side of the membrane; it reads RTTVYDVETNRTSCAMDFNLVVSQPGQETYWIAGLSISSTA. N-linked (GlcNAc...) asparagine glycosylation is present at Asn182. Residues 214–234 form a helical membrane-spanning segment; it reads LGFLIPLLAMMVCYGFIGCTV. At 235–251 the chain is on the cytoplasmic side; the sequence is TRHFNSLRKEDQRKRRL. Residues 252–272 form a helical membrane-spanning segment; sequence LKIITTLVVVFAACWMPFHVV. Residues 273-286 are Extracellular-facing; it reads KTMDALSYLNLAPD. The helical transmembrane segment at 287 to 307 threads the bilayer; the sequence is SCTFLNLLLLAHPYATCLAYV. The Cytoplasmic segment spans residues 308–359; that stretch reads NSCLNPLLYAFFDLRFRSQCLCLLNLKKALHASPASSLSSQKTEAQSLATKV.

This sequence belongs to the G-protein coupled receptor 1 family. As to expression, mesendodermal expression at the blastoderm margin appears by 4.5 hpf. At early gastrulation, expression is maintained ventrolaterally while expression in dorsal cells and random deep cells declines. During gastrulation and segmentation, expression is maintained in adaxial, intermediate, and lateral plate mesoderm. During late segmentation, expressed in several regions including the forming heart. By 24 hpf, expressed in the dorsal aorta, caudal vein, and intersomitic blood vessels.

It is found in the cell membrane. Its function is as follows. G protein-coupled receptor for peptide hormones apelin (apln) and apelin receptor early endogenous ligand (apela), that plays a role in the regulation of normal cardiovascular function and fluid homeostasis. When acting as apelin receptor, activates both G(i) protein pathway that inhibits adenylate cyclase activity, and the beta-arrestin pathway that promotes internalization of the receptor. Also functions as mechanoreceptor that is activated by pathological stimuli in a G-protein-independent fashion to induce beta-arrestin signaling, hence eliciting cardiac hypertrophy. However, the presence of apelin ligand blunts cardiac hypertrophic induction from APLNR/APJ on response to pathological stimuli. Plays a key role in early development such as gastrulation, blood vessels formation and heart morphogenesis by acting as a receptor for apela hormone, promoting endoderm and mesendoderm cell migration and regulating the migration of cells fated to become myocardial progenitors, respectively. Positively regulates angioblast migration toward the embryonic midline, i.e. the position of the future vessel formation, during vasculogenesis. May promote sinus venosus (SV)-derived endothelial cells migration into the developing heart to promote coronary blood vessel development. Required for cardiovascular development, particularly for intersomitic vein angiogenesis by acting as a receptor for apln hormone. Plays a role in various processes in adults such as regulation of blood vessel formation, blood pressure, heart contractility and heart failure. Acts redundantly with agtrl1a in heart development. G protein-coupled receptor for peptide hormones apelin (APLN) and apelin receptor early endogenous ligand (APELA/ELA), that plays a role in the regulation of normal cardiovascular function and fluid homeostasis. When acting as apelin receptor, activates both G(i) protein pathway that inhibits adenylate cyclase activity, and the beta-arrestin pathway that promotes internalization of the receptor. APLNR/APJ also functions as mechanoreceptor that is activated by pathological stimuli in a G-protein-independent fashion to induce beta-arrestin signaling, hence eliciting cardiac hypertrophy. Plays a key role in early development such as gastrulation, blood vessels formation and heart morphogenesis by acting as a APELA receptor. May promote angioblast migration toward the embryonic midline, i.e. the position of the future vessel formation, during vasculogenesis. Promotes sinus venosus (SV)-derived endothelial cells migration into the developing heart to promote coronary blood vessel development. Also plays a role in various processes in adults such as regulation of blood vessel formation, blood pressure, heart contractility and heart failure. The protein is Apelin receptor B (aplnrb) of Danio rerio (Zebrafish).